Reading from the N-terminus, the 211-residue chain is Protein TMA23 (211 aa).

Residues A115 to I211 form a disordered region. A compositionally biased stretch (low complexity) spans S116 to S125. Basic residues-rich tracts occupy residues V140–K149, K158–K176, and S185–K197. Residues K198–I211 show a composition bias toward basic and acidic residues.

Forms homooligomers. Associates with ribosomal complexes.

It localises to the nucleus. The protein resides in the nucleolus. Its function is as follows. Trans-acting factors of the ribosome biogenesis process. This is Protein TMA23 (TMA23) from Saccharomyces cerevisiae (strain ATCC 204508 / S288c) (Baker's yeast).